The chain runs to 695 residues: Nucleoprotein (695 aa).

Coiled coils occupy residues 316–341 and 372–399; these read VNVG…RRHE and QTLA…VEDQ. The segment at 424–611 is disordered; that stretch reads QARPMNRPTA…SPSAPQEDTR (188 aa). Residues 438-447 are compositionally biased toward basic and acidic residues; the sequence is VDDKIEHEST. Composition is skewed to polar residues over residues 495-505 and 537-552; these read RQSQDLNNSQG and TTDS…SDNE. The PTAP/PSAP motif motif lies at 603-606; that stretch reads PSAP.

This sequence belongs to the filoviruses nucleoprotein family. Homooligomer. Homomultimerizes to form the nucleocapsid. Binds to viral genomic RNA. Interacts with VP35 and VP30 to form the nucleocapsid. Also interacts with VP24 and VP40. In terms of processing, phosphorylated.

The protein resides in the virion. It localises to the host cytoplasm. Functionally, encapsidates the genome, protecting it from nucleases. The encapsidated genomic RNA is termed the nucleocapsid and serves as template for transcription and replication. During replication, encapsidation by NP is coupled to RNA synthesis and all replicative products are resistant to nucleases. This chain is Nucleoprotein (NP), found in Chlorocebus aethiops (Green monkey).